A 146-amino-acid chain; its full sequence is Large ribosomal subunit protein uL13 (146 aa).

Belongs to the universal ribosomal protein uL13 family. As to quaternary structure, part of the 50S ribosomal subunit.

This protein is one of the early assembly proteins of the 50S ribosomal subunit, although it is not seen to bind rRNA by itself. It is important during the early stages of 50S assembly. This chain is Large ribosomal subunit protein uL13, found in Bdellovibrio bacteriovorus (strain ATCC 15356 / DSM 50701 / NCIMB 9529 / HD100).